The sequence spans 78 residues: Esculentin-2Vb (78 aa).

Positions 1–22 (MFTMKKSLLLLFFLGTISLSLC) are cleaved as a signal peptide. Positions 23–39 (EEERGADEEEGDGEKLM) are excised as a propeptide. A disulfide bridge connects residues Cys-72 and Cys-78.

As to expression, expressed by the skin glands.

The protein resides in the secreted. Antimicrobial peptide. This chain is Esculentin-2Vb, found in Odorrana versabilis (Chinese bamboo leaf odorous frog).